We begin with the raw amino-acid sequence, 646 residues long: EF-hand calcium-binding domain-containing protein 6 (646 aa).

EF-hand domains follow at residues 1–27 (FLET…FDIP), 28–63 (LTPR…NYSP), 109–144 (DCYQ…CGCS), 214–249 (SSQL…FCHK), 321–356 (SHYH…NVQI), and 357–392 (LTDE…ERAA). Position 29 is a phosphothreonine (Thr29). Residues 390–452 (RAATPTATGD…TTAIPGTPPL (63 aa)) are disordered. Over residues 432 to 446 (KPQSHPCTAASTTAI) the composition is skewed to polar residues. A Phosphoserine modification is found at Ser435. Residues Thr439 and Thr449 each carry the phosphothreonine modification. The interaction with PARK7 stretch occupies residues 448-646 (GTPPLQNCDP…YNDFLRAFLQ (199 aa)). EF-hand domains follow at residues 468–503 (GCWR…FNLD), 504–539 (ISKE…LLKA), 579–614 (HCWR…YSIN), and 615–646 (LSEE…AFLQ). The tract at residues 552–646 (NAHKMKDSGA…YNDFLRAFLQ (95 aa)) is interaction with AR.

In terms of assembly, microtubule inner protein component of sperm flagellar doublet microtubules. Binds PARK7. Part of a ternary complex containing PARK7, EFCAB6/DJBP and AR.

It is found in the nucleus. The protein resides in the cytoplasm. The protein localises to the cytoskeleton. It localises to the flagellum axoneme. Functionally, negatively regulates the androgen receptor by recruiting histone deacetylase complex, and protein DJ-1 antagonizes this inhibition by abrogation of this complex. Microtubule inner protein (MIP) part of the dynein-decorated doublet microtubules (DMTs) in cilia axoneme, which is required for motile cilia beating. This is EF-hand calcium-binding domain-containing protein 6 (EFCAB6) from Macaca fascicularis (Crab-eating macaque).